The following is a 560-amino-acid chain: Interferon alpha/beta receptor 1 (560 aa).

An N-terminal signal peptide occupies residues 1–24 (MLSLLGATTLMLVAGRWVLPAASG). Residues 25 to 437 (EANLKSENVE…EKTKPGNTSK (413 aa)) are Extracellular-facing. N-linked (GlcNAc...) asparagine glycosylation is found at asparagine 47 and asparagine 55. Cysteine 76 and cysteine 84 are disulfide-bonded. 4 N-linked (GlcNAc...) asparagine glycosylation sites follow: asparagine 85, asparagine 108, asparagine 109, and asparagine 172. Fibronectin type-III domains are found at residues 126–226 (QIGP…TTER), 231–329 (SPEN…TEVK), and 333–433 (FPPV…TKPG). A disulfide bridge connects residues cysteine 199 and cysteine 220. N-linked (GlcNAc...) asparagine glycans are attached at residues asparagine 222, asparagine 285, asparagine 313, asparagine 359, and asparagine 377. A disulfide bridge connects residues cysteine 283 and cysteine 291. A disulfide bridge links cysteine 404 with cysteine 427. Residue asparagine 434 is glycosylated (N-linked (GlcNAc...) asparagine). Residues 438-458 (TWLIAGICTALFSILVVIYVV) form a helical membrane-spanning segment. Residues 459–560 (RVFLRCVKYV…SEEFLQQDSV (102 aa)) lie on the Cytoplasmic side of the membrane. Cysteine 464 carries S-palmitoyl cysteine lipidation. 2 positions are modified to phosphotyrosine; by TYK2: tyrosine 467 and tyrosine 482. The interval 492 to 501 (LLSTSEEQTE) is important for interaction with TYK2. A phosphoserine mark is found at serine 496 and serine 536. The segment at 524–560 (VHEEYNSQASQDSGNYSNEDENSGSKISEEFLQQDSV) is disordered. Polar residues predominate over residues 529–540 (NSQASQDSGNYS).

The protein belongs to the type II cytokine receptor family. In terms of assembly, heterodimer with IFNAR2; forming the receptor for type I interferon. Interacts with TYK2. Interacts with STAT1 and STAT2; the interaction requires its phosphorylation at Tyr-482. Interacts (serine-phosphorylated form) with FBXW11, the substrate recognition component of a SCF (SKP1-CUL1-F-box protein) E3 ubiquitin-protein ligase complex. Interacts with SHMT2; this promotes interaction with ABRAXAS2 and the BRISC complex. Interacts with TRIM10; this interaction prevents association between IFNAR1 and TYK2. In terms of processing, ubiquitinated, leading to its internalization and degradation. Polyubiquitinated via 'Lys-48'-linked and 'Lys-63'-linked ubiquitin chains, leading to receptor internalization and lysosomal degradation. The 'Lys-63'-linked ubiquitin chains are cleaved off by the BRISC complex. Post-translationally, phosphorylated on tyrosine residues in response to interferon-binding: phosphorylation by TYK2 tyrosine kinase creates docking sites for STAT proteins. Phosphorylated on serine residues in response to interferon binding; this promotes interaction with FBXW11 and ubiquitination. Palmitoylation at Cys-464 is required for the activation of STAT1 and STAT2. In terms of tissue distribution, expressed in the endometrium. Expressed in all tissues examined except conceptus at day 15 of pregnancy.

It localises to the cell membrane. The protein resides in the late endosome. Its subcellular location is the lysosome. Its function is as follows. Together with IFNAR2, forms the heterodimeric receptor for type I interferons (including interferons alpha, beta, epsilon, omega and kappa). Type I interferon binding activates the JAK-STAT signaling cascade, resulting in transcriptional activation or repression of interferon-regulated genes that encode the effectors of the interferon response. Mechanistically, type I interferon-binding brings the IFNAR1 and IFNAR2 subunits into close proximity with one another, driving their associated Janus kinases (JAKs) (TYK2 bound to IFNAR1 and JAK1 bound to IFNAR2) to cross-phosphorylate one another. The activated kinases phosphorylate specific tyrosine residues on the intracellular domains of IFNAR1 and IFNAR2, forming docking sites for the STAT transcription factors. STAT proteins are then phosphorylated by the JAKs, promoting their translocation into the nucleus to regulate expression of interferon-regulated genes. Can also act independently of IFNAR2: form an active IFNB1 receptor by itself and activate a signaling cascade that does not involve activation of the JAK-STAT pathway. The chain is Interferon alpha/beta receptor 1 (IFNAR1) from Ovis aries (Sheep).